Consider the following 93-residue polypeptide: Putative pterin-4-alpha-carbinolamine dehydratase (93 aa).

This sequence belongs to the pterin-4-alpha-carbinolamine dehydratase family.

It catalyses the reaction (4aS,6R)-4a-hydroxy-L-erythro-5,6,7,8-tetrahydrobiopterin = (6R)-L-erythro-6,7-dihydrobiopterin + H2O. The polypeptide is Putative pterin-4-alpha-carbinolamine dehydratase (Roseiflexus sp. (strain RS-1)).